A 427-amino-acid polypeptide reads, in one-letter code: Thymidine phosphorylase (427 aa).

It belongs to the thymidine/pyrimidine-nucleoside phosphorylase family. As to quaternary structure, homodimer.

It catalyses the reaction thymidine + phosphate = 2-deoxy-alpha-D-ribose 1-phosphate + thymine. In terms of biological role, the enzymes which catalyze the reversible phosphorolysis of pyrimidine nucleosides are involved in the degradation of these compounds and in their utilization as carbon and energy sources, or in the rescue of pyrimidine bases for nucleotide synthesis. This is Thymidine phosphorylase (deoA) from Mycobacterium tuberculosis (strain CDC 1551 / Oshkosh).